Consider the following 225-residue polypeptide: uncharacterized protein (225 aa).

Residues 1–22 (MLQHYSVSWKKGLAALCLLAVA) form the signal peptide. A 4Fe-4S ferredoxin-type domain is found at 161 to 190 (GNLTAAEEKKTGCLVCLDSCPVGIVSNATY).

This is an uncharacterized protein from Escherichia coli (strain K12).